Here is a 171-residue protein sequence, read N- to C-terminus: 3-hydroxydecanoyl-[acyl-carrier-protein] dehydratase (171 aa).

The active site involves His70.

The protein belongs to the thioester dehydratase family. FabA subfamily. In terms of assembly, homodimer.

The protein resides in the cytoplasm. It catalyses the reaction a (3R)-hydroxyacyl-[ACP] = a (2E)-enoyl-[ACP] + H2O. The enzyme catalyses (3R)-hydroxydecanoyl-[ACP] = (2E)-decenoyl-[ACP] + H2O. It carries out the reaction (2E)-decenoyl-[ACP] = (3Z)-decenoyl-[ACP]. It functions in the pathway lipid metabolism; fatty acid biosynthesis. Functionally, necessary for the introduction of cis unsaturation into fatty acids. Catalyzes the dehydration of (3R)-3-hydroxydecanoyl-ACP to E-(2)-decenoyl-ACP and then its isomerization to Z-(3)-decenoyl-ACP. Can catalyze the dehydratase reaction for beta-hydroxyacyl-ACPs with saturated chain lengths up to 16:0, being most active on intermediate chain length. In Pseudomonas fluorescens (strain Pf0-1), this protein is 3-hydroxydecanoyl-[acyl-carrier-protein] dehydratase.